The primary structure comprises 459 residues: Glutamyl-tRNA reductase (459 aa).

Substrate contacts are provided by residues 47-50, Ser140, 145-147, and Gln151; these read TCNR and EPQ. The Nucleophile role is filled by Cys48. 220–225 contributes to the NADP(+) binding site; it reads AAGEMN.

Belongs to the glutamyl-tRNA reductase family. Homodimer.

It catalyses the reaction (S)-4-amino-5-oxopentanoate + tRNA(Glu) + NADP(+) = L-glutamyl-tRNA(Glu) + NADPH + H(+). It functions in the pathway porphyrin-containing compound metabolism; protoporphyrin-IX biosynthesis; 5-aminolevulinate from L-glutamyl-tRNA(Glu): step 1/2. Catalyzes the NADPH-dependent reduction of glutamyl-tRNA(Glu) to glutamate 1-semialdehyde (GSA). This is Glutamyl-tRNA reductase from Psychrobacter arcticus (strain DSM 17307 / VKM B-2377 / 273-4).